The chain runs to 598 residues: Elongation factor 4 (598 aa).

In terms of domain architecture, tr-type G spans 2 to 184 (KNIRNFSIIA…EIVHKIPAPE (183 aa)). GTP contacts are provided by residues 14–19 (DHGKST) and 131–134 (NKID).

The protein belongs to the TRAFAC class translation factor GTPase superfamily. Classic translation factor GTPase family. LepA subfamily.

The protein resides in the cell inner membrane. It catalyses the reaction GTP + H2O = GDP + phosphate + H(+). Functionally, required for accurate and efficient protein synthesis under certain stress conditions. May act as a fidelity factor of the translation reaction, by catalyzing a one-codon backward translocation of tRNAs on improperly translocated ribosomes. Back-translocation proceeds from a post-translocation (POST) complex to a pre-translocation (PRE) complex, thus giving elongation factor G a second chance to translocate the tRNAs correctly. Binds to ribosomes in a GTP-dependent manner. The chain is Elongation factor 4 from Pasteurella multocida (strain Pm70).